We begin with the raw amino-acid sequence, 534 residues long: Peptide chain release factor 3 (534 aa).

The 270-residue stretch at 9-278 folds into the tr-type G domain; that stretch reads ARRRTFAIIS…FFIEHAPPPQ (270 aa). GTP contacts are provided by residues 18–25, 86–90, and 140–143; these read SHPDAGKT, DTPGH, and NKLD.

Belongs to the TRAFAC class translation factor GTPase superfamily. Classic translation factor GTPase family. PrfC subfamily.

Its subcellular location is the cytoplasm. Its function is as follows. Increases the formation of ribosomal termination complexes and stimulates activities of RF-1 and RF-2. It binds guanine nucleotides and has strong preference for UGA stop codons. It may interact directly with the ribosome. The stimulation of RF-1 and RF-2 is significantly reduced by GTP and GDP, but not by GMP. This chain is Peptide chain release factor 3, found in Xanthomonas oryzae pv. oryzae (strain MAFF 311018).